The primary structure comprises 233 residues: MKKAVVLLSGGLDSTTCMSVAHKAGYELYPLSFDYGQRHQRELEAAKAVAQYYKVKEHRLIKIEHVGGSALTDASIQVPDYTEDGQIPVTYVPARNILFLSYALGYGEVMGAEAIFIGISSVDYSGYPDCRPEFLQAFQKVVDVGTKAGVSGQTIAIKAPLLYLSKAETIQLAAENGAPLHHTTSCYRGGEKACGTCDSCTLRLKGFAEAGIKDPIDYVNQGDRSCFSTPLED.

8 to 18 (LSGGLDSTTCM) is an ATP binding site. Cys186, Cys194, Cys197, and Cys200 together coordinate Zn(2+).

The protein belongs to the QueC family. As to quaternary structure, homodimer. Requires Zn(2+) as cofactor.

It catalyses the reaction 7-carboxy-7-deazaguanine + NH4(+) + ATP = 7-cyano-7-deazaguanine + ADP + phosphate + H2O + H(+). Its pathway is purine metabolism; 7-cyano-7-deazaguanine biosynthesis. Catalyzes the ATP-dependent conversion of 7-carboxy-7-deazaguanine (CDG) to 7-cyano-7-deazaguanine (preQ(0)). This Desulfitobacterium hafniense (strain Y51) protein is 7-cyano-7-deazaguanine synthase 2.